A 145-amino-acid polypeptide reads, in one-letter code: Ventricular natriuretic peptide (145 aa).

A signal peptide spans 1–24; it reads MRMGKIAVGYGFLLLLVFQLGVRA. Cys-117 and Cys-133 form a disulfide bridge.

Belongs to the natriuretic peptide family. Heart atrium and ventricle, and to a very low extent in brain.

The protein localises to the secreted. In terms of biological role, exhibits natriuretic and vasodepressor activity. The sequence is that of Ventricular natriuretic peptide (vnp) from Acipenser transmontanus (White sturgeon).